An 873-amino-acid chain; its full sequence is DNA mismatch repair protein MutS (873 aa).

601–608 (GPNMSGKS) is a binding site for ATP.

The protein belongs to the DNA mismatch repair MutS family.

Functionally, this protein is involved in the repair of mismatches in DNA. It is possible that it carries out the mismatch recognition step. This protein has a weak ATPase activity. This Staphylococcus epidermidis (strain ATCC 12228 / FDA PCI 1200) protein is DNA mismatch repair protein MutS.